A 188-amino-acid polypeptide reads, in one-letter code: MMHPVAGSNPAFCGPGKPSCLNEDAMRAADQFDLYSSQQNKYSHTVSHKPMVCQRQDPLNETHLQPTSGRNIEIKDELKKKKNLNRSGKRGRPSGTTKSAGYRTSTGRPLGTTKAAGFKTSPGRPLGTTKAAGYKVSPGRPPGSIKALSRLADLGYGCGTAAFPYPMMHSRVVHGLQETSGEVKPPSE.

The residue at position 37 (S37) is a Phosphoserine. A Glycyl lysine isopeptide (Lys-Gly) (interchain with G-Cter in SUMO2) cross-link involves residue K75. A compositionally biased stretch (basic residues) spans 80 to 92 (KKKNLNRSGKRGR). The interval 80–141 (KKKNLNRSGK…AGYKVSPGRP (62 aa)) is disordered. Over residues 94–107 (SGTTKSAGYRTSTG) the composition is skewed to polar residues. Phosphoserine is present on residues S121 and S180. Residue K184 forms a Glycyl lysine isopeptide (Lys-Gly) (interchain with G-Cter in SUMO2) linkage.

Belongs to the UPF0461 family.

The chain is UPF0461 protein C5orf24 homolog from Mus musculus (Mouse).